Reading from the N-terminus, the 300-residue chain is Sulfate adenylyltransferase subunit 2 (300 aa).

The tract at residues 281-300 (RAIDRDEAGSMEKKKREGYF) is disordered.

This sequence belongs to the PAPS reductase family. CysD subfamily. As to quaternary structure, heterodimer composed of CysD, the smaller subunit, and CysN.

It catalyses the reaction sulfate + ATP + H(+) = adenosine 5'-phosphosulfate + diphosphate. Its pathway is sulfur metabolism; hydrogen sulfide biosynthesis; sulfite from sulfate: step 1/3. In terms of biological role, with CysN forms the ATP sulfurylase (ATPS) that catalyzes the adenylation of sulfate producing adenosine 5'-phosphosulfate (APS) and diphosphate, the first enzymatic step in sulfur assimilation pathway. APS synthesis involves the formation of a high-energy phosphoric-sulfuric acid anhydride bond driven by GTP hydrolysis by CysN coupled to ATP hydrolysis by CysD. The polypeptide is Sulfate adenylyltransferase subunit 2 (Brucella abortus (strain 2308)).